The sequence spans 245 residues: Uridylate kinase (245 aa).

Lysine 16–glycine 19 provides a ligand contact to ATP. The involved in allosteric activation by GTP stretch occupies residues glycine 24 to glycine 29. Glycine 59 is a binding site for UMP. 2 residues coordinate ATP: glycine 60 and arginine 64. UMP contacts are provided by residues aspartate 78 and asparagine 139 to threonine 146. ATP is bound by residues asparagine 167, tyrosine 173, and aspartate 176.

This sequence belongs to the UMP kinase family. Homohexamer.

Its subcellular location is the cytoplasm. The catalysed reaction is UMP + ATP = UDP + ADP. Its pathway is pyrimidine metabolism; CTP biosynthesis via de novo pathway; UDP from UMP (UMPK route): step 1/1. Its activity is regulated as follows. Allosterically activated by GTP. Inhibited by UTP. In terms of biological role, catalyzes the reversible phosphorylation of UMP to UDP. The polypeptide is Uridylate kinase (Deinococcus radiodurans (strain ATCC 13939 / DSM 20539 / JCM 16871 / CCUG 27074 / LMG 4051 / NBRC 15346 / NCIMB 9279 / VKM B-1422 / R1)).